Consider the following 298-residue polypeptide: Homoserine kinase (298 aa).

85-95 (PMGGLGSSAAS) is an ATP binding site.

It belongs to the GHMP kinase family. Homoserine kinase subfamily.

The protein localises to the cytoplasm. The catalysed reaction is L-homoserine + ATP = O-phospho-L-homoserine + ADP + H(+). Its pathway is amino-acid biosynthesis; L-threonine biosynthesis; L-threonine from L-aspartate: step 4/5. In terms of biological role, catalyzes the ATP-dependent phosphorylation of L-homoserine to L-homoserine phosphate. This is Homoserine kinase from Methanopyrus kandleri (strain AV19 / DSM 6324 / JCM 9639 / NBRC 100938).